The sequence spans 199 residues: Proteasome subunit beta type-2 (199 aa).

It belongs to the peptidase T1B family. As to quaternary structure, the 26S proteasome consists of a 20S proteasome core and two 19S regulatory subunits. The 20S proteasome core is composed of 28 subunits that are arranged in four stacked rings, resulting in a barrel-shaped structure. The two end rings are each formed by seven alpha subunits, and the two central rings are each formed by seven beta subunits. The catalytic chamber with the active sites is on the inside of the barrel.

The protein resides in the cytoplasm. It localises to the nucleus. Functionally, non-catalytic component of the proteasome, a multicatalytic proteinase complex which is characterized by its ability to cleave peptides with Arg, Phe, Tyr, Leu, and Glu adjacent to the leaving group at neutral or slightly basic pH. The proteasome has an ATP-dependent proteolytic activity. In Caenorhabditis elegans, this protein is Proteasome subunit beta type-2 (pbs-4).